The primary structure comprises 352 residues: Phosphoribosylformylglycinamidine cyclo-ligase (352 aa).

It belongs to the AIR synthase family.

Its subcellular location is the cytoplasm. The enzyme catalyses 2-formamido-N(1)-(5-O-phospho-beta-D-ribosyl)acetamidine + ATP = 5-amino-1-(5-phospho-beta-D-ribosyl)imidazole + ADP + phosphate + H(+). The protein operates within purine metabolism; IMP biosynthesis via de novo pathway; 5-amino-1-(5-phospho-D-ribosyl)imidazole from N(2)-formyl-N(1)-(5-phospho-D-ribosyl)glycinamide: step 2/2. In Pseudomonas syringae pv. tomato (strain ATCC BAA-871 / DC3000), this protein is Phosphoribosylformylglycinamidine cyclo-ligase.